A 310-amino-acid chain; its full sequence is Putative methyltransferase mtx subunit H (310 aa).

It belongs to the MtrH family. May be part of a complex composed of 3 subunits; MtxA, MtxH and MtxX.

The polypeptide is Putative methyltransferase mtx subunit H (mtxH) (Methanosarcina mazei (strain ATCC BAA-159 / DSM 3647 / Goe1 / Go1 / JCM 11833 / OCM 88) (Methanosarcina frisia)).